Here is a 498-residue protein sequence, read N- to C-terminus: Lysine--tRNA ligase (498 aa).

Positions 409 and 416 each coordinate Mg(2+).

The protein belongs to the class-II aminoacyl-tRNA synthetase family. In terms of assembly, homodimer. The cofactor is Mg(2+).

The protein resides in the cytoplasm. It catalyses the reaction tRNA(Lys) + L-lysine + ATP = L-lysyl-tRNA(Lys) + AMP + diphosphate. The protein is Lysine--tRNA ligase of Coxiella burnetii (strain CbuK_Q154) (Coxiella burnetii (strain Q154)).